The primary structure comprises 198 residues: Guanylyl cyclase-activating protein 2 (198 aa).

Gly2 is lipidated: N-myristoyl glycine. EF-hand domains lie at 16–51, 52–87, 88–123, and 139–174; these read DVAE…QDNH, EAAE…VLRG, KLEH…IYKL, and TPEE…DKWV. The Ca(2+) site is built by Asp65, Asn67, Asp69, Thr71, Glu76, Asp101, Asp103, Asn105, Cys107, Glu112, Asp152, Asn154, Asp156, Gln158, and Glu163.

In terms of assembly, undergoes dimerization at low calcium ions concentration, while the presence of calcium ions inhibits its dimerization. Dimerization correlates with its ability to activate GC. In terms of tissue distribution, retina and pineal gland.

In terms of biological role, stimulates synthesis of cGMP in photoreceptors. Thought to mediate Ca(2+)-sensitive regulation of retinal guanylyl cyclase (GC), a key event in recovery of the dark state of rod photoreceptors following light exposure. This Gallus gallus (Chicken) protein is Guanylyl cyclase-activating protein 2 (GUCA1B).